Here is a 307-residue protein sequence, read N- to C-terminus: Methionyl-tRNA formyltransferase (307 aa).

Residue Ser-108–Pro-111 coordinates (6S)-5,6,7,8-tetrahydrofolate.

This sequence belongs to the Fmt family.

The enzyme catalyses L-methionyl-tRNA(fMet) + (6R)-10-formyltetrahydrofolate = N-formyl-L-methionyl-tRNA(fMet) + (6S)-5,6,7,8-tetrahydrofolate + H(+). Attaches a formyl group to the free amino group of methionyl-tRNA(fMet). The formyl group appears to play a dual role in the initiator identity of N-formylmethionyl-tRNA by promoting its recognition by IF2 and preventing the misappropriation of this tRNA by the elongation apparatus. The protein is Methionyl-tRNA formyltransferase of Xylella fastidiosa (strain 9a5c).